We begin with the raw amino-acid sequence, 432 residues long: Trigger factor (432 aa).

One can recognise a PPIase FKBP-type domain in the interval 163–248 (GDVVVLDFAA…VHAVKERRLP (86 aa)).

The protein belongs to the FKBP-type PPIase family. Tig subfamily.

It localises to the cytoplasm. The enzyme catalyses [protein]-peptidylproline (omega=180) = [protein]-peptidylproline (omega=0). Functionally, involved in protein export. Acts as a chaperone by maintaining the newly synthesized protein in an open conformation. Functions as a peptidyl-prolyl cis-trans isomerase. In Nitratidesulfovibrio vulgaris (strain DSM 19637 / Miyazaki F) (Desulfovibrio vulgaris), this protein is Trigger factor.